Consider the following 451-residue polypeptide: Proline--tRNA ligase (451 aa).

This sequence belongs to the class-II aminoacyl-tRNA synthetase family. ProS type 2 subfamily. In terms of assembly, homodimer.

It localises to the cytoplasm. The enzyme catalyses tRNA(Pro) + L-proline + ATP = L-prolyl-tRNA(Pro) + AMP + diphosphate. In terms of biological role, catalyzes the attachment of proline to tRNA(Pro) in a two-step reaction: proline is first activated by ATP to form Pro-AMP and then transferred to the acceptor end of tRNA(Pro). This Roseobacter denitrificans (strain ATCC 33942 / OCh 114) (Erythrobacter sp. (strain OCh 114)) protein is Proline--tRNA ligase.